We begin with the raw amino-acid sequence, 532 residues long: MQTPKPIKRALLSVSDKTGILDFATALHNAGVELLSTGGTAKLLAEAGLPVKEVSDHTGHPEIMAGRVKTLHPKIHGGILARRGVDEAVMEENNIAPIDLVVVNLYPFAATVANEDCTLEDAIENIDIGGPTMVRAAAKNHKDVTIVVNAADYSRVLAEMNDNNGSLTYSTRFDLAIKAFEHTAEYDGMIANYFGARLDSTGCEADCDHQHSEFPRTYNIQLTKKQDLRYGENSHQEAAFYVENNIQEASVATATQLQGKELSFNNIADTDAALECVKEFEEPACVIVKHANPCGVAIGNDILTAYDRAFKTDPTSAFGGIIAFNRELDAKTAHAIVDRQFVEVIIAPAVSDEAKEVVSAKKNVRLLACGDWAGQLTEGYDFKRVNGGLLVQERDFGMVEMEDLEVVTKRKPSEEELRDLMFCWKVAKYVKSNAIVYCKDGMTVGVGAGQMSRVYSAKIAGIKAADENLEVAGSVMASDAFFPFRDGIDAAAHAGIKAVIQPGGSMRDQEVIDAADEHGIAMVFTGMRHFRH.

One can recognise an MGS-like domain in the interval Met1–Val148.

The protein belongs to the PurH family.

The catalysed reaction is (6R)-10-formyltetrahydrofolate + 5-amino-1-(5-phospho-beta-D-ribosyl)imidazole-4-carboxamide = 5-formamido-1-(5-phospho-D-ribosyl)imidazole-4-carboxamide + (6S)-5,6,7,8-tetrahydrofolate. It carries out the reaction IMP + H2O = 5-formamido-1-(5-phospho-D-ribosyl)imidazole-4-carboxamide. Its pathway is purine metabolism; IMP biosynthesis via de novo pathway; 5-formamido-1-(5-phospho-D-ribosyl)imidazole-4-carboxamide from 5-amino-1-(5-phospho-D-ribosyl)imidazole-4-carboxamide (10-formyl THF route): step 1/1. It participates in purine metabolism; IMP biosynthesis via de novo pathway; IMP from 5-formamido-1-(5-phospho-D-ribosyl)imidazole-4-carboxamide: step 1/1. The protein is Bifunctional purine biosynthesis protein PurH of Alteromonas mediterranea (strain DSM 17117 / CIP 110805 / LMG 28347 / Deep ecotype).